Here is a 253-residue protein sequence, read N- to C-terminus: Phosphoadenosine 5'-phosphosulfate reductase (253 aa).

Cysteine 239 (nucleophile; cysteine thiosulfonate intermediate) is an active-site residue.

The protein belongs to the PAPS reductase family. CysH subfamily.

The protein localises to the cytoplasm. It catalyses the reaction [thioredoxin]-disulfide + sulfite + adenosine 3',5'-bisphosphate + 2 H(+) = [thioredoxin]-dithiol + 3'-phosphoadenylyl sulfate. It participates in sulfur metabolism; hydrogen sulfide biosynthesis; sulfite from sulfate: step 3/3. Functionally, catalyzes the formation of sulfite from phosphoadenosine 5'-phosphosulfate (PAPS) using thioredoxin as an electron donor. In Aliivibrio salmonicida (strain LFI1238) (Vibrio salmonicida (strain LFI1238)), this protein is Phosphoadenosine 5'-phosphosulfate reductase.